Reading from the N-terminus, the 316-residue chain is Olfactory receptor 2G6 (316 aa).

Over 1–25 the chain is Extracellular; it reads MEETNNSSEKGFLLLGFSDQPQLER. Asparagine 5 and asparagine 6 each carry an N-linked (GlcNAc...) asparagine glycan. Residues 26–49 traverse the membrane as a helical segment; that stretch reads FLFAIILYFYVLSLLGNTALILVC. The Cytoplasmic segment spans residues 50–57; it reads CLDSRLHT. A helical membrane pass occupies residues 58 to 79; it reads PMYFFLSNLSCVDICFTTSVAP. Over 80–100 the chain is Extracellular; sequence QLLVTMNKKDKTMSYGGCVAQ. Cysteine 97 and cysteine 189 are joined by a disulfide. A helical membrane pass occupies residues 101–120; it reads LYVAMGLGSSECILLAVMAY. The Cytoplasmic segment spans residues 121 to 139; it reads DRYAAVCRPLRYIAIMHPR. The helical transmembrane segment at 140 to 158 threads the bilayer; it reads FCASLAGGAWLSGLITSLI. Topologically, residues 159–195 are extracellular; the sequence is QCSLTVQLPLCGHRTLDHIFCEVPVLIKLACVDTTFN. The chain crosses the membrane as a helical span at residues 196–219; the sequence is EAELFVASVVFLIVPVLLILVSYG. Residues 220–236 lie on the Cytoplasmic side of the membrane; it reads FITQAVLRIKSAAGRQK. A helical transmembrane segment spans residues 237-259; the sequence is AFGTCSSHLVVVIIFYGTIIFMY. The Extracellular segment spans residues 260–272; that stretch reads LQPANRRSKNQGK. A helical transmembrane segment spans residues 273–292; the sequence is FVSLFYTIVTPLLNPIIYTL. The Cytoplasmic portion of the chain corresponds to 293–316; the sequence is RNKDVKGALRTLILGSAAGQSHKD.

The protein belongs to the G-protein coupled receptor 1 family.

It is found in the cell membrane. Functionally, odorant receptor. The polypeptide is Olfactory receptor 2G6 (OR2G6) (Homo sapiens (Human)).